Reading from the N-terminus, the 327-residue chain is Cytochrome c oxidase subunit 2 (327 aa).

The N-terminal stretch at 1–23 (MEQIPASIWTLTAGVVVTLISFW) is a signal peptide. Transmembrane regions (helical) follow at residues 56–78 (LFLV…AGEE) and 96–114 (AIPA…DIFQ). The Cu cation site is built by H221, C255, C259, and H263.

The protein belongs to the cytochrome c oxidase subunit 2 family. The cofactor is Cu cation.

The protein resides in the cell membrane. It catalyses the reaction 4 Fe(II)-[cytochrome c] + O2 + 8 H(+)(in) = 4 Fe(III)-[cytochrome c] + 2 H2O + 4 H(+)(out). Its function is as follows. Subunits I and II form the functional core of the enzyme complex. Electrons originating in cytochrome c are transferred via heme a and Cu(A) to the binuclear center formed by heme a3 and Cu(B). The polypeptide is Cytochrome c oxidase subunit 2 (ctaC) (Thermostichus vulcanus (Synechococcus vulcanus)).